The following is a 501-amino-acid chain: Protein DETOXIFICATION 37 (501 aa).

A run of 12 helical transmembrane segments spans residues 44–64, 84–104, 134–154, 163–183, 200–220, 222–242, 280–300, 310–330, 352–372, 396–416, 422–442, and 453–473; these read MMIE…VYVI, LAAA…LLLG, VVLI…NPIL, VATL…AYAV, SAYI…IAVY, LGYG…IIVV, AVML…AGLL, LAIC…FNAA, VVTT…VLSW, FLAI…VAVG, FVAY…GFVL, and IWTG…IVTL.

The protein belongs to the multi antimicrobial extrusion (MATE) (TC 2.A.66.1) family.

The protein localises to the membrane. This Arabidopsis thaliana (Mouse-ear cress) protein is Protein DETOXIFICATION 37.